The following is a 178-amino-acid chain: Cysteine protease inhibitor 7 (178 aa).

2 disulfide bridges follow: Cys41/Cys93 and Cys141/Cys147.

Belongs to the protease inhibitor I3 (leguminous Kunitz-type inhibitor) family.

It is found in the vacuole. Inhibitor of cysteine proteases. May protect the plant by inhibiting proteases of invading organisms. This chain is Cysteine protease inhibitor 7, found in Solanum tuberosum (Potato).